The chain runs to 429 residues: Neuronal pentraxin-2 (429 aa).

An N-terminal signal peptide occupies residues 1-14 (MLALLTVGVALAVA). 2 N-linked (GlcNAc...) asparagine glycosylation sites follow: Asn-146 and Asn-187. Residues 221-422 (DAFKVSLPLR…GASKWPVETC (202 aa)) form the Pentraxin (PTX) domain. An intrachain disulfide couples Cys-251 to Cys-311. Ca(2+)-binding residues include Asn-275, Glu-353, Gln-354, Asp-355, and Gln-365. A glycan (N-linked (GlcNAc...) asparagine) is linked at Asn-391.

Homooligomer or heterooligomer (probably pentamer) with neuronal pentraxin receptor (NPTXR). The cofactor is Ca(2+).

It localises to the secreted. In terms of biological role, likely to play role in the modification of cellular properties that underlie long-term plasticity. Binds to agar matrix in a calcium-dependent manner. The chain is Neuronal pentraxin-2 (Nptx2) from Mus musculus (Mouse).